A 1262-amino-acid chain; its full sequence is Collagen alpha-1(III) chain (1262 aa).

The N-terminal stretch at 1–23 is a signal peptide; the sequence is MMSFVQKVSLFILAVFQPSVILA. Positions 24–150 are cleaved as a propeptide — N-terminal propeptide; it reads QQDALGGCTH…PSISGGSFSP (127 aa). In terms of domain architecture, VWFC spans 29 to 88; it reads GGCTHLGQEYADRDVWKPEPCQICVCDSGSVLCDDIICDDQELDCPNPEIPLGECCPVCP. Disordered stretches follow at residues 95–143 and 160–1000; these read TELP…CPSI and GSVG…GGVA. Low complexity predominate over residues 102–118; the sequence is GPKGDPGSPGSPGRTGA. Positions 119–134 are enriched in pro residues; it reads PGPPGQPGSPGAPGPP. The nonhelical region (N-terminal) stretch occupies residues 145–164; the sequence is GGSFSPQYDSYDVKAGSVGM. The segment at 165–994 is triple-helical region; that stretch reads GYPPQPISGF…PGPSGPPGPC (830 aa). Residues 167 to 190 are compositionally biased toward pro residues; it reads PPQPISGFPGPPGPSGPPGPPGHA. The span at 192-201 shows a compositional bias: low complexity; it reads PPGSNGYQGP. The segment covering 202 to 216 has biased composition (pro residues); sequence PGEPGQPGPSGPPGP. Residues 228–240 are compositionally biased toward basic and acidic residues; that stretch reads KDGEPGRPGRNGD. Positions 253–264 are enriched in low complexity; that stretch reads PGMPGMPGMKGA. K262 is subject to 5-hydroxylysine. The segment covering 265–274 has biased composition (basic and acidic residues); the sequence is RGFDGKDGAK. Composition is skewed to low complexity over residues 276–295 and 339–376; these read DSGA…NGSP and TAGF…QGQA. Residue K283 is modified to 5-hydroxylysine. Residues 389–414 show a composition bias toward gly residues; the sequence is GSPGGKGEMGPSGIPGGPGPPGGRGL. 2 stretches are compositionally biased toward low complexity: residues 534 to 549 and 631 to 640; these read MRGL…SDGK and PGPSGSPGLQ. Residues 641 to 650 are compositionally biased toward gly residues; sequence GLPGGPGPAG. A compositionally biased stretch (low complexity) spans 672 to 684; that stretch reads PKGENGIPGERGP. A compositionally biased stretch (gly residues) spans 692–701; the sequence is GARGGPGPAG. Composition is skewed to low complexity over residues 723 to 738, 781 to 790, 802 to 817, and 828 to 838; these read LQGM…SPGP, TGPAGAPGPA, QGLP…PGQN, and PPGLRGEAGPP. 5-hydroxylysine is present on K859. Over residues 863 to 872 the composition is skewed to gly residues; the sequence is GSPGGPGAAG. Over residues 895-904 the composition is skewed to pro residues; that stretch reads PGVPGPPGHP. Positions 927–940 are enriched in low complexity; it reads PQGAIGSPGASGAR. The segment covering 976–993 has biased composition (pro residues); that stretch reads AGPPGQPGLPGPSGPPGP. A nonhelical region (C-terminal) region spans residues 995-1003; the sequence is CGGGVASLG. The propeptide at 1018–1262 is C-terminal propeptide; the sequence is DEPKENEINL…GVDVGPVCFL (245 aa). The Fibrillar collagen NC1 domain maps to 1028–1262; sequence GEIMSSMKSI…GVDVGPVCFL (235 aa). Cystine bridges form between C1058-C1090, C1098-C1260, and C1168-C1213. Residues D1076, N1078, Q1079, C1081, and D1084 each contribute to the Ca(2+) site. Residue N1163 is glycosylated (N-linked (GlcNAc...) asparagine).

The protein belongs to the fibrillar collagen family. In terms of assembly, trimers of identical alpha 1(III) chains. The chains are linked to each other by interchain disulfide bonds. Trimers are also cross-linked via hydroxylysines. In terms of processing, prolines at the third position of the tripeptide repeating unit (G-X-Y) are hydroxylated in some or all of the chains.

It localises to the secreted. Its subcellular location is the extracellular space. It is found in the extracellular matrix. Its function is as follows. Collagen type III occurs in most soft connective tissues along with type I collagen. In Gallus gallus (Chicken), this protein is Collagen alpha-1(III) chain (COL3A1).